A 271-amino-acid polypeptide reads, in one-letter code: Sulfur carrier protein adenylyltransferase (271 aa).

ATP contacts are provided by residues arginine 13, glycine 40, glutamate 61, arginine 72, lysine 85, leucine 109, and 129–133 (DNFPT). Zn(2+) contacts are provided by cysteine 175 and cysteine 178. Cysteine 192 participates in a covalent cross-link: Glycyl cysteine thioester (Cys-Gly) (interchain with G-Cter in TtuB). Residues cysteine 249 and cysteine 252 each coordinate Zn(2+).

Belongs to the HesA/MoeB/ThiF family. It depends on Zn(2+) as a cofactor. Conjugated to TtuB via a covalent linkage that likely involves a lysine residue. Is able to form a covalent thioester adduct with TtuB via Cys-192 in vitro.

It catalyses the reaction [molybdopterin-synthase sulfur-carrier protein]-C-terminal Gly-Gly + ATP + H(+) = [molybdopterin-synthase sulfur-carrier protein]-C-terminal Gly-Gly-AMP + diphosphate. The catalysed reaction is [ThiS sulfur-carrier protein]-C-terminal Gly-Gly + ATP + H(+) = [ThiS sulfur-carrier protein]-C-terminal Gly-Gly-AMP + diphosphate. The enzyme catalyses [TtuB sulfur-carrier protein]-C-terminal Gly-Gly + ATP + H(+) = [TtuB sulfur-carrier protein]-C-terminal Gly-Gly-AMP + diphosphate. The protein operates within tRNA modification. Its pathway is cofactor biosynthesis; thiamine diphosphate biosynthesis. It participates in cofactor biosynthesis; molybdopterin biosynthesis. Its activity is regulated as follows. Enzymatic activity may be regulated by TtuB conjugation. Functionally, adenylyltransferase involved in the biosynthesis of several sulfur compounds. Is required for the 2-thiolation of 5-methyluridine residue at position 54 in the T loop of tRNAs, leading to 5-methyl-2-thiouridine (m(5)s(2)U or s(2)T). This modification allows thermal stabilization of tRNAs in thermophilic microorganisms, and is essential for cell growth at high temperatures. TtuC catalyzes the adenylation by ATP of the carboxyl group of the C-terminal glycine of sulfur carrier protein TtuB. Is also involved in the biosynthesis of thiamine, molybdenum cofactor (Moco) and probably tungsten cofactor (Wco), by adenylating the sulfur carriers ThiS and MoaD. Is required for the conjugation of TtuB to target proteins. The sequence is that of Sulfur carrier protein adenylyltransferase from Thermus thermophilus (strain ATCC BAA-163 / DSM 7039 / HB27).